A 287-amino-acid polypeptide reads, in one-letter code: Elongation factor Ts (287 aa).

The involved in Mg(2+) ion dislocation from EF-Tu stretch occupies residues 80–83; sequence TDFL.

This sequence belongs to the EF-Ts family.

Its subcellular location is the cytoplasm. In terms of biological role, associates with the EF-Tu.GDP complex and induces the exchange of GDP to GTP. It remains bound to the aminoacyl-tRNA.EF-Tu.GTP complex up to the GTP hydrolysis stage on the ribosome. The sequence is that of Elongation factor Ts from Ectopseudomonas mendocina (strain ymp) (Pseudomonas mendocina).